The sequence spans 461 residues: Argininosuccinate lyase (461 aa).

The protein belongs to the lyase 1 family. Argininosuccinate lyase subfamily.

It is found in the cytoplasm. The enzyme catalyses 2-(N(omega)-L-arginino)succinate = fumarate + L-arginine. It functions in the pathway amino-acid biosynthesis; L-arginine biosynthesis; L-arginine from L-ornithine and carbamoyl phosphate: step 3/3. This Dehalococcoides mccartyi (strain CBDB1) protein is Argininosuccinate lyase.